The following is a 372-amino-acid chain: F-box protein AFR (372 aa).

Polar residues predominate over residues 1–15 (MAEQETTSNINTIND). The tract at residues 1 to 27 (MAEQETTSNINTINDQAEEETRTKSQP) is disordered. The F-box domain maps to 29–74 (ISGLPNDIAELCLLRLPYPYHALYRSVSSSWNKTITNPRFLFSKQS). 5 Kelch repeats span residues 80 to 126 (PYLF…HALS), 135 to 178 (KLFV…NVNG), 179 to 227 (KIMA…VIGK), 229 to 276 (MCVT…IRDR), and 279 to 325 (VISE…DRVF).

As to quaternary structure, part of a SCF (ASK-cullin-F-box) protein ligase complex. Interacts with SKP1A.

The protein operates within protein modification; protein ubiquitination. Functionally, component of SCF (ASK-cullin-F-box) E3 ubiquitin ligase complexes, which may mediate the ubiquitination and subsequent proteasomal degradation of target proteins. Part of the phyA-mediated signaling transduction pathway leading to the regulation of gene expression and hypocotyls elongation in response to red and far-red light exposure. The sequence is that of F-box protein AFR (AFR) from Arabidopsis thaliana (Mouse-ear cress).